The chain runs to 2254 residues: Voltage-dependent T-type calcium channel subunit alpha-1G (2254 aa).

Residues 1-48 (MDEEEDGAGAEESGQPRSFTQLNDLSGAGGRQGPGSTEKDPGSADSEA) form a disordered region. Residues 1 to 80 (MDEEEDGAGA…RSWCLRTVCN (80 aa)) are Cytoplasmic-facing. Polar residues predominate over residues 15–24 (QPRSFTQLND). The I repeat unit spans residues 68 to 398 (SRPRSWCLRT…LCLVVIATQF (331 aa)). The helical transmembrane segment at 81-101 (PWFERVSMLVILLNCVTLGMF) threads the bilayer. At 102–119 (RPCEDIACDSQRCRILQA) the chain is on the extracellular side. A helical transmembrane segment spans residues 120 to 141 (FDDFIFAFFAVEMVVKMVALGI). At 142–150 (FGKKCYLGD) the chain is on the cytoplasmic side. A helical transmembrane segment spans residues 151–170 (TWNRLDFFIVIAGMLEYSLD). The Extracellular portion of the chain corresponds to 171 to 175 (LQNVS). N173 carries N-linked (GlcNAc...) asparagine glycosylation. Residues 176–193 (FSAVRTVRVLRPLRAINR) form a helical membrane-spanning segment. Residues 194–213 (VPSMRILVTLLLDTLPMLGN) are Cytoplasmic-facing. Residues 214–234 (VLLLCFFVFFIFGIVGVQLWA) traverse the membrane as a helical segment. The Extracellular portion of the chain corresponds to 235 to 370 (GLLRNRCFLP…YFVMDAHSFY (136 aa)). 4 N-linked (GlcNAc...) asparagine glycosylation sites follow: N246, N306, N310, and N322. A helical membrane pass occupies residues 371–395 (NFIYFILLIIVGSFFMINLCLVVIA). At 396–744 (TQFSETKQRE…DTFRKIVDSK (349 aa)) the chain is on the cytoplasmic side. S467 is subject to Phosphoserine. The segment covering 494–506 (LVHHHHHHHHHYH) has biased composition (basic residues). Disordered regions lie at residues 494 to 513 (LVHHHHHHHHHYHLGNGTLR), 525 to 553 (DANGSRRLMLPPPSTPTPSGGPPRGAESV), 579 to 598 (ASGRTVGSGKVYPTVHTSPP), and 699 to 721 (DAQHSDLRDPHSRRRQRSLGPDA). Over residues 534 to 545 (LPPPSTPTPSGG) the composition is skewed to pro residues. S716 is subject to Phosphoserine. One copy of the II repeat lies at 730–968 (WRLICDTFRK…LLVAILVEGF (239 aa)). Residues 745–765 (YFGRGIMIAILVNTLSMGIEY) traverse the membrane as a helical segment. At 766-778 (HEQPEELTNALEI) the chain is on the extracellular side. Residues 779-800 (SNIVFTSLFALEMLLKLLVYGP) form a helical membrane-spanning segment. At 801–806 (FGYIKN) the chain is on the cytoplasmic side. A helical membrane pass occupies residues 807-825 (PYNIFDGVIVVISVWEIVG). At 826–833 (QQGGGLSV) the chain is on the extracellular side. Residues 834–857 (LRTFRLMRVLKLVRFLPALQRQLV) form a helical membrane-spanning segment. The Cytoplasmic segment spans residues 858–868 (VLMKTMDNVAT). The helical transmembrane segment at 869–889 (FCMLLMLFIFIFSILGMHLFG) threads the bilayer. The Extracellular portion of the chain corresponds to 890–940 (CKFASERDGDTLPDRKNFDSLLWAIVTVFQILTQEDWNKVLYNGMASTSSW). The helical transmembrane segment at 941-965 (AALYFIALMTFGNYVLFNLLVAILV) threads the bilayer. Topologically, residues 966-1251 (EGFQAEGDAT…SRFRLLCHRI (286 aa)) are cytoplasmic. Positions 1024-1209 (TPMSHPKSSS…GDDDNDEGNL (186 aa)) are disordered. 2 stretches are compositionally biased toward low complexity: residues 1041-1052 (GSGSRRTSSSGS) and 1065-1091 (PPSARSSPHSPWSAASSWTSRRSSRNS). Acidic residues-rich tracts occupy residues 1117–1126 (ESQDEEESSE) and 1196–1206 (PQLDGDDDNDE). Phosphoserine occurs at positions 1118, 1124, and 1125. An III repeat occupies 1242–1519 (SRFRLLCHRI…MFVGVVVENF (278 aa)). Residues 1252-1274 (ITHKMFDHVVLVIIFLNCITIAM) form a helical membrane-spanning segment. Over 1275-1292 (ERPKIDPHSAERIFLTLS) the chain is Extracellular. A helical membrane pass occupies residues 1293–1313 (NYIFTAVFLAEMTVKVVALGW). Residues 1314 to 1323 (CFGEQAYLRS) are Cytoplasmic-facing. A helical transmembrane segment spans residues 1324 to 1343 (SWNVLDGLLVLISVIDILVS). Over 1344–1357 (MVSDSGTKILGMLR) the chain is Extracellular. A helical transmembrane segment spans residues 1358–1379 (VLRLLRTLRPLRVISRAQGLKL). Residues 1380–1389 (VVETLMSSLK) lie on the Cytoplasmic side of the membrane. A helical membrane pass occupies residues 1390 to 1413 (PIGNIVVICCAFFIIFGILGVQLF). Residues 1414–1490 (KGKFFVCQGE…DQQPIMNHNP (77 aa)) are Extracellular-facing. N-linked (GlcNAc...) asparagine glycosylation is found at N1427 and N1430. The helical transmembrane segment at 1491 to 1516 (WMLLYFISFLLIVAFFVLNMFVGVVV) threads the bilayer. The Cytoplasmic portion of the chain corresponds to 1517–1578 (ENFHKCRQHQ…RLLVHHLCTS (62 aa)). One copy of the IV repeat lies at 1564–1822 (DYSRFRLLVH…VVIAVLMKHL (259 aa)). A helical membrane pass occupies residues 1579–1599 (HYLDLFITGVIGLNVVTMAME). The Extracellular segment spans residues 1600–1613 (HYQQPQILDEALKI). A helical membrane pass occupies residues 1614–1635 (CNYIFTVIFVFESVFKLVAFGF). Topologically, residues 1636-1642 (RRFFQDR) are cytoplasmic. The chain crosses the membrane as a helical span at residues 1643 to 1661 (WNQLDLAIVLLSIMGITLE). The Extracellular segment spans residues 1662–1675 (EIEVNLSLPINPTI). N-linked (GlcNAc...) asparagine glycosylation occurs at N1666. A helical transmembrane segment spans residues 1676–1699 (IRIMRVLRIARVLKLLKMAVGMRA). Residues 1700-1713 (LLHTVMQALPQVGN) are Cytoplasmic-facing. Residues 1714–1734 (LGLLFMLLFFIFAALGVELFG) traverse the membrane as a helical segment. At 1735-1794 (DLECDETHPCEGLGRHATFRNFGMAFLTLFRVSTGDNWNGIMKDTLRDCDQESTCYNTVI) the chain is on the extracellular side. The helical transmembrane segment at 1795–1822 (SPIYFVSFVLTAQFVLVNVVIAVLMKHL) threads the bilayer. Residues 1823-2254 (EESNKEAKEE…LSSDPTDMDP (432 aa)) are Cytoplasmic-facing. Positions 2153–2254 (DSGSQPRLCP…LSSDPTDMDP (102 aa)) are disordered. Low complexity predominate over residues 2184–2193 (SPPSISIDPP). Polar residues-rich tracts occupy residues 2220-2232 (PSVSSPLDSTAAS) and 2240-2254 (LSLSGLSSDPTDMDP).

The protein belongs to the calcium channel alpha-1 subunit (TC 1.A.1.11) family. CACNA1G subfamily. In response to raising of intracellular calcium, the T-type channels are activated by CaM-kinase II. In terms of tissue distribution, highly expressed in brain. Moderate expression in heart; low expression in placenta, kidney and lung.

It localises to the cell membrane. The protein resides in the cytoplasm. It catalyses the reaction Ca(2+)(in) = Ca(2+)(out). Voltage-sensitive calcium channels (VSCC) mediate the entry of calcium ions into excitable cells and are also involved in a variety of calcium-dependent processes, including muscle contraction, hormone or neurotransmitter release, gene expression, cell motility, cell division and cell death. The isoform alpha-1G gives rise to T-type calcium currents. T-type calcium channels belong to the 'low-voltage activated (LVA)' group and are strongly blocked by nickel and mibefradil. A particularity of this type of channels is an opening at quite negative potentials and a voltage-dependent inactivation. T-type channels serve pacemaking functions in both central neurons and cardiac nodal cells and support calcium signaling in secretory cells and vascular smooth muscle. They may also be involved in the modulation of firing patterns of neurons which is important for information processing as well as in cell growth processes. The protein is Voltage-dependent T-type calcium channel subunit alpha-1G (Cacna1g) of Rattus norvegicus (Rat).